A 601-amino-acid chain; its full sequence is MKLSSLPSGLGLASLLGLISSATAYSATDLTTMYDWNQIIKPLEWGQLNFIHTTDTHGWLGGHLRDARYKADFGEFKSFALRMKELADFKGVDLLMVDTGDLHDGNGLSDASDPQGIYTNNIFTYLPYDILTIGNHELYQAAISNNTHEYFVPHWNGTYLASNVQIYNSSNELEQFGGESTYFITKHGVRTLAMGFLFNFSSNANNTVVTPVETAIKSEWYQQQINRTDVDLFLLIGHIPVRDYDEWKSLHASIRKVHPNTPIQILGGHSHIRDFAVYDEASVSLEGGRYCETVGWLSIDGLSASNATRQYVGRPVTNETRQSYPNLPKPATPLYYTRRYIDFNRQNFRFHTQQSEDSFDTPEGVELSKVIKQYRDDLNLSYVFGCIPKNYYMTEVSPQAEDSIFKLMVDHILPEVLVNENRSSVPHIIISNGGGVRGSMYEGTFGPDEMFQLNPFLTNYYNYIPDVPYKYAKKLYSILNGGSTLRNVNDYLAALNPGYVTSDDFGEDGDDTVHTYVSTYAVPNVLQAQVGFNTTSAPETVDVVFLNYFQTKVLKALNTMVNETIYTLSNVTQYWVREDGKDSSPYMFAQYVQQEWSDYCD.

Residues 1–24 (MKLSSLPSGLGLASLLGLISSATA) form the signal peptide.

It localises to the membrane. This is an uncharacterized protein from Schizosaccharomyces pombe (strain 972 / ATCC 24843) (Fission yeast).